A 427-amino-acid chain; its full sequence is Bifunctional enzyme MtnB/MtnX (427 aa).

The interval 1–221 (MRKPLIICDF…LEETAEVKEW (221 aa)) is HK-MTPenyl-1-P phosphatase. Residues 222-427 (MSEQKRQELA…KLKALQAYHV (206 aa)) form an MTRu-1-P dehydratase region. 2 residues coordinate Zn(2+): His317 and His319.

It in the N-terminal section; belongs to the HAD-like hydrolase superfamily. MtnX family. In the C-terminal section; belongs to the aldolase class II family. MtnB subfamily. Homotetramer. Requires Zn(2+) as cofactor.

The catalysed reaction is 5-(methylsulfanyl)-D-ribulose 1-phosphate = 5-methylsulfanyl-2,3-dioxopentyl phosphate + H2O. It catalyses the reaction 2-hydroxy-5-methylsulfanyl-3-oxopent-1-enyl phosphate + H2O = 1,2-dihydroxy-5-(methylsulfanyl)pent-1-en-3-one + phosphate. It functions in the pathway amino-acid biosynthesis; L-methionine biosynthesis via salvage pathway; L-methionine from S-methyl-5-thio-alpha-D-ribose 1-phosphate: step 2/6. Its pathway is amino-acid biosynthesis; L-methionine biosynthesis via salvage pathway; L-methionine from S-methyl-5-thio-alpha-D-ribose 1-phosphate: step 4/6. Catalyzes the dehydration of methylthioribulose-1-phosphate (MTRu-1-P) into 2,3-diketo-5-methylthiopentyl-1-phosphate (DK-MTP-1-P). Functionally, dephosphorylates 2-hydroxy-3-keto-5-methylthiopentenyl-1-phosphate (HK-MTPenyl-1-P) yielding 1,2-dihydroxy-3-keto-5-methylthiopentene (DHK-MTPene). The protein is Bifunctional enzyme MtnB/MtnX (mtnB/mtnX) of Bacillus licheniformis (strain ATCC 14580 / DSM 13 / JCM 2505 / CCUG 7422 / NBRC 12200 / NCIMB 9375 / NCTC 10341 / NRRL NRS-1264 / Gibson 46).